Consider the following 175-residue polypeptide: Ribosome maturation factor RimM (175 aa).

The region spanning 99–172 (SIEFTWEHFI…KLTMIIPDGL (74 aa)) is the PRC barrel domain.

The protein belongs to the RimM family. In terms of assembly, binds ribosomal protein uS19.

The protein localises to the cytoplasm. Its function is as follows. An accessory protein needed during the final step in the assembly of 30S ribosomal subunit, possibly for assembly of the head region. Essential for efficient processing of 16S rRNA. May be needed both before and after RbfA during the maturation of 16S rRNA. It has affinity for free ribosomal 30S subunits but not for 70S ribosomes. The protein is Ribosome maturation factor RimM of Porphyromonas gingivalis (strain ATCC BAA-308 / W83).